A 213-amino-acid polypeptide reads, in one-letter code: Nucleolar protein 12 (213 aa).

The stretch at 33–96 (GFHKRKVERK…RLVTAKTESV (64 aa)) forms a coiled coil. Residues 118-213 (ARLLGLTPPE…LTGKARHSGE (96 aa)) form a disordered region. 2 stretches are compositionally biased toward basic residues: residues 170 to 182 (AHSRKKVKRKHPR) and 198 to 213 (KAQRRRLTGKARHSGE).

This sequence belongs to the RRP17 family. In terms of assembly, interacts with KIAA1191.

The protein localises to the nucleus. It localises to the nucleolus. It is found in the cytoplasm. Functionally, multifunctional RNA binding protein that plays a role in RNA metabolism and DNA maintenance. Participates in the resolution of DNA stress and the maintenance of genome integrity by localizing to sites of DNA insults. Also plays a role in proper nucleolar organization by limiting nucleolar size and regulating nucleolar number. Mechanistically, regulates the nucleolar levels of fibrillarin and nucleolin, two key players in pre-rRNA processing and ribosome assembly. The sequence is that of Nucleolar protein 12 (NOL12) from Homo sapiens (Human).